The following is a 166-amino-acid chain: Ribosome biogenesis regulatory protein homolog (166 aa).

2 positions are modified to phosphoserine: S34 and S64. The disordered stretch occupies residues 144–166 (KEKKLTSKQVRNTSKKIKRSRRH). Positions 156–166 (TSKKIKRSRRH) are enriched in basic residues.

This sequence belongs to the RRS1 family. In terms of assembly, component of a hexameric 5S RNP precursor complex, composed of 5S RNA, rrs1, rpf2, rpl5a/rpl5b, rpl11a/rpl11b and syo1; this complex acts as a precursor for ribosome assembly. Interacts with sad1.

The protein resides in the nucleus. Its subcellular location is the nucleolus. Functionally, involved in ribosomal large subunit assembly. The polypeptide is Ribosome biogenesis regulatory protein homolog (Schizosaccharomyces pombe (strain 972 / ATCC 24843) (Fission yeast)).